Here is a 742-residue protein sequence, read N- to C-terminus: Photosystem I P700 chlorophyll a apoprotein A2 (742 aa).

Helical transmembrane passes span 46–69, 135–158, 175–199, 273–291, 336–359, 375–401, 423–445, and 525–543; these read LFST…FHIA, LFQA…LHLQ, LNHH…HVAI, IAHH…GHMY, LHFQ…QHMG, SALY…IFFV, ALIS…IYVH, and FLVH…LILI. Residues cysteine 567 and cysteine 576 each coordinate [4Fe-4S] cluster. The next 2 membrane-spanning stretches (helical) occupy residues 583–604 and 651–673; these read AMYL…YWHW and LSVW…MFLI. Positions 662, 670, and 678 each coordinate divinyl chlorophyll a. Tryptophan 679 is a binding site for phylloquinone. Residues 715–735 form a helical membrane-spanning segment; it reads LVGLAHFTIGNILTFGAFVIA.

It belongs to the PsaA/PsaB family. In terms of assembly, the PsaA/B heterodimer binds the P700 divinyl chlorophyll special pair and subsequent electron acceptors. PSI consists of a core antenna complex that captures photons, and an electron transfer chain that converts photonic excitation into a charge separation. The cyanobacterial PSI reaction center is composed of one copy each of PsaA,B,C,D,E,F,I,J,K,L,M and X, and forms trimeric complexes. The cofactor is PSI electron transfer chain: 5 divinyl chlorophyll a, 1 divinyl chlorophyll a', 2 phylloquinones and 3 4Fe-4S clusters. PSI core antenna: 90 divinyl chlorophyll a, 22 carotenoids, 3 phospholipids and 1 galactolipid. P700 is a divinyl chlorophyll a/divinyl chlorophyll a' dimer, A0 is one or more divinyl chlorophyll a, A1 is one or both phylloquinones and FX is a shared 4Fe-4S iron-sulfur center..

It is found in the cellular thylakoid membrane. It carries out the reaction reduced [plastocyanin] + hnu + oxidized [2Fe-2S]-[ferredoxin] = oxidized [plastocyanin] + reduced [2Fe-2S]-[ferredoxin]. Its function is as follows. PsaA and PsaB bind P700, the primary electron donor of photosystem I (PSI), as well as the electron acceptors A0, A1 and FX. PSI is a plastocyanin/cytochrome c6-ferredoxin oxidoreductase, converting photonic excitation into a charge separation, which transfers an electron from the donor P700 chlorophyll pair to the spectroscopically characterized acceptors A0, A1, FX, FA and FB in turn. Oxidized P700 is reduced on the lumenal side of the thylakoid membrane by plastocyanin or cytochrome c6. In Prochlorococcus marinus (strain MIT 9515), this protein is Photosystem I P700 chlorophyll a apoprotein A2.